The following is a 355-amino-acid chain: Suppressor of lethality of KEX2 GAS1 double null mutant protein 1 (355 aa).

Over 1–8 the chain is Extracellular; the sequence is MTASTSVA. The chain crosses the membrane as a helical; Signal-anchor for type III membrane protein span at residues 9 to 29; it reads VGCAVGIPVGVGIIIAVCFWF. Residues 30–355 are Cytoplasmic-facing; the sequence is NLQKRYKREE…REFIESLRPK (326 aa). Residues 70-114 form a disordered region; it reads EAALASSELKNPDHTSGSSEGSAHPEEKDGKSRDQEKPLGKKNSK. Positions 92–108 are enriched in basic and acidic residues; that stretch reads AHPEEKDGKSRDQEKPL. At Ser142 the chain carries Phosphoserine. At Thr273 the chain carries Phosphothreonine. The interval 276-298 is disordered; that stretch reads SAAQSQLPNTFDKDNEGIDADHS. The segment covering 286–298 has biased composition (basic and acidic residues); the sequence is FDKDNEGIDADHS.

The protein belongs to the SKG1 family.

It localises to the cell membrane. The protein resides in the bud membrane. Functionally, plays a role in cell wall integrity. Affects the cell wall polymer composition in the growing region of the cell. The chain is Suppressor of lethality of KEX2 GAS1 double null mutant protein 1 (SKG1) from Saccharomyces cerevisiae (strain Lalvin EC1118 / Prise de mousse) (Baker's yeast).